The sequence spans 753 residues: Inactive protein-tyrosine phosphatase egg-4 (753 aa).

Disordered regions lie at residues 26–46 (TSLQSFCSGNTDDSSADSTDN) and 75–145 (SFRK…SGHG). A compositionally biased stretch (low complexity) spans 35–46 (NTDDSSADSTDN). 2 stretches are compositionally biased toward basic and acidic residues: residues 84–94 (AQKDRRSKERL) and 129–145 (VSEKPKDEGRREDSGHG). The Tyrosine-protein phosphatase domain maps to 408–661 (MERRFEILEN…IFVHRLVAFF (254 aa)).

It belongs to the protein-tyrosine phosphatase family. As to quaternary structure, part of a complex, consisting of pseudophosphatases egg-3, egg-4, egg-5 and kinase mbk-2; this complex is required for the oocyte-to-zygote transition. Interacts (via tyrosine-protein phosphatase domain) with kinase mbk-2 (via 'Tyr-619' and 'Tyr-621'); mbk-2 tyrosine phosphorylation enhances the interaction. The interaction inhibits mbk-2 kinase activity and is required for mbk-2 oocyte cortex localization. Interacts with egg-3.

It localises to the cytoplasm. It is found in the cell cortex. Inactive phosphatase which acts redundantly with egg-5 in the oocyte-to-zygote transition. Required for the polarization of cortical actin cytoskeleton rearrangement in the oocyte before and after fertilization. Together with egg-5, required for the cortical localization of kinase mbk-2 and for the inhibition of mbk-2 kinase activity in maturing oocyte until the end of meiosis I. Also required for kinase mbk-2, pseudophosphatase egg-3 and chitin synthase chs-1 localization to cytoplasmic foci after fertilization. The chain is Inactive protein-tyrosine phosphatase egg-4 from Caenorhabditis elegans.